The following is a 396-amino-acid chain: F-box protein At2g21930 (396 aa).

The region spanning 19–65 is the F-box domain; sequence SGNSVQIPFDLIPEILKRLPVKTLARFLSVSKEYTSIIRNRDFMKSY.

The polypeptide is F-box protein At2g21930 (Arabidopsis thaliana (Mouse-ear cress)).